The sequence spans 195 residues: Thymidine kinase (195 aa).

ATP is bound by residues 15-22 (GSMFSGKS) and 88-91 (DEVQ). E89 serves as the catalytic Proton acceptor. The Zn(2+) site is built by C145, C148, C183, and X186.

The protein belongs to the thymidine kinase family. Homotetramer.

Its subcellular location is the cytoplasm. The catalysed reaction is thymidine + ATP = dTMP + ADP + H(+). The protein is Thymidine kinase of Bacillus cereus (strain ATCC 10987 / NRS 248).